A 226-amino-acid polypeptide reads, in one-letter code: MEVGSATKKLQCQRIGCNAMFTDDDNPQGSCQFHASGPFFHDGMKEWSCCKQRSHDFSLFLEIPGCKTGKHTTEKPVLAKSVPKHPVAAPTSSPDANAATKDSCSRCRQGFFCSDHGSQPKEQIKQTLNTPGQAEEEKIEPLAPPVQKAVIDINQPQVCKNKGCGQTFKERDNHETACSHHPGPAVFHDRLRGWKCCDVHVKEFDEFMEIPPCTKGWHSSSPDPAV.

The Zn(2+) site is built by Cys12, Cys17, Cys31, His34, Cys49, Cys50, Cys66, and His71. Residues 12–71 (CQRIGCNAMFTDDDNPQGSCQFHASGPFFHDGMKEWSCCKQRSHDFSLFLEIPGCKTGKH) form the CHORD 1 domain. The CCCH motif lies at 104 to 124 (CSRCRQGFFCSDHGSQPKEQI). Positions 159, 164, 178, 181, 196, 197, 213, and 218 each coordinate Zn(2+). The CHORD 2 domain occupies 159 to 218 (CKNKGCGQTFKERDNHETACSHHPGPAVFHDRLRGWKCCDVHVKEFDEFMEIPPCTKGWH).

As to quaternary structure, interacts with HSP90-1, HSP90-2, SGT1A and SGT1B. Forms a ternary complex with SGT1A and barley HSP90.

Required specifically for plant innate immunity. Is essential for resistance conferred by multiple R genes recognizing different bacterial and oomycete pathogen isolates like avirulent P.syringae or H.parasitica (downy mildew). Contributes additively with SGT1B to RPP5-dependent resistance. Functions as a positive regulator of RPS5 accumulation by assisting its stabilization. May function as co-chaperone of HSP90-2 to positively regulate the steady-state accumulation of RPM1 and protect it from SGT1-mediated degradation. Acts as a negative regulator of pathogen-associated molecular pattern (PAMP)-triggered immunity. The protein is Cysteine and histidine-rich domain-containing protein RAR1 (RAR1) of Arabidopsis thaliana (Mouse-ear cress).